A 732-amino-acid polypeptide reads, in one-letter code: Catalase-peroxidase (732 aa).

A disordered region spans residues 1 to 26 (MADNKKSPETGGITMQIPGKGRTNRD). Residues 96-219 (WHSAGTYRTF…LAAVQMGLIY (124 aa)) constitute a cross-link (tryptophyl-tyrosyl-methioninium (Trp-Tyr) (with M-245)). The Proton acceptor role is filled by His-97. The tryptophyl-tyrosyl-methioninium (Tyr-Met) (with W-96) cross-link spans 219–245 (YVNPEGPDGNPDPVAAARDIREVFARM). His-260 contacts heme b. A disordered region spans residues 344–365 (KPKGEAGAGTVPDPHDPKKRHA).

This sequence belongs to the peroxidase family. Peroxidase/catalase subfamily. Homodimer or homotetramer. Heme b serves as cofactor. Post-translationally, formation of the three residue Trp-Tyr-Met cross-link is important for the catalase, but not the peroxidase activity of the enzyme.

It catalyses the reaction H2O2 + AH2 = A + 2 H2O. The catalysed reaction is 2 H2O2 = O2 + 2 H2O. Functionally, bifunctional enzyme with both catalase and broad-spectrum peroxidase activity. The sequence is that of Catalase-peroxidase from Methanospirillum hungatei JF-1 (strain ATCC 27890 / DSM 864 / NBRC 100397 / JF-1).